A 428-amino-acid polypeptide reads, in one-letter code: Arabinosyltransferase RRA2 (428 aa).

The Cytoplasmic segment spans residues Met-1–Arg-15. Residues Ile-16 to Asn-36 form a helical; Signal-anchor for type II membrane protein membrane-spanning segment. Residues Gly-37 to Asp-428 lie on the Lumenal side of the membrane. Positions Asp-250–Asp-252 match the DXD motif motif. N-linked (GlcNAc...) asparagine glycosylation is present at Asn-278.

This sequence belongs to the glycosyltransferase 77 family. In terms of tissue distribution, expressed in roots, rosette and cauline leaves, stems, flowers and siliques.

It is found in the golgi apparatus membrane. Its function is as follows. Plays a role in the arabinosylation of cell wall components. Involved in the arabinosylation of extensin proteins in root hair cells. Extensins are structural glycoproteins present in cell walls and its arabinosylation is important for root hair cell development. The chain is Arabinosyltransferase RRA2 from Arabidopsis thaliana (Mouse-ear cress).